Consider the following 60-residue polypeptide: MARLKITQIKSKVSEKQYQRDTLRSLGLKRIGDVTVREDTAQNRGYVRTVAHLVKVEEID.

The protein belongs to the universal ribosomal protein uL30 family. Part of the 50S ribosomal subunit.

The protein is Large ribosomal subunit protein uL30 of Leifsonia xyli subsp. xyli (strain CTCB07).